The chain runs to 224 residues: Response regulator protein GraR (224 aa).

In terms of domain architecture, Response regulatory spans 2–115 (QILLVEDDNT…VLIAKLQAIY (114 aa)). Asp51 is subject to 4-aspartylphosphate. The segment at residues 126 to 224 (KRTLTWQDAV…KVGKGYMAHE (99 aa)) is a DNA-binding region (ompR/PhoB-type). Phosphothreonine is present on residues Thr128, Thr130, and Thr149.

Interacts with GraX. In terms of processing, phosphorylated by GraS. Phosphorylated by Stk1; phosphorylation increases the DNA-binding activity of GraR.

The protein resides in the cytoplasm. In terms of biological role, member of the two-component regulatory system GraR/GraS involved in resistance against cationic antimicrobial peptides (CAMPs). Upon phosphorylation by GraS, functions as a transcription regulator by direct binding to promoter regions of target genes such as adhesins, exoproteins, transporters, toxins, and proteins involved in cell wall synthesis. Down-regulates the expression of many genes involved in RNA and amino acid synthesis or glycolysis. This Staphylococcus aureus (strain Mu50 / ATCC 700699) protein is Response regulator protein GraR (graR).